We begin with the raw amino-acid sequence, 286 residues long: L-cysteine S-thiosulfotransferase subunit SoxA (286 aa).

The N-terminal stretch at 1–28 is a signal peptide; that stretch reads MKKTIQRGLFTGALVLLTAMTSKPAHAA. Cysteine 106 and cysteine 137 are oxidised to a cystine. The Cytochrome c domain occupies 180–286; sequence DAYMKGKEMF…LKFNGPASRK (107 aa). Heme-binding residues include cysteine 200 and histidine 204. Arginine 243 is a substrate binding site. Cysteine 247 contacts heme. Cysteine 247 acts as the Cysteine persulfide intermediate in catalysis.

It belongs to the SoxA family. In terms of assembly, heterodimer of SoxA and SoxX. The SoxAX complex interacts with CT1020, SoxAX-binding protein SaxB (SoxK); this interaction stimulates catalytic activity of the complex. Heme is required as a cofactor. Post-translationally, cysteine persulfide at Cys-247.

The protein resides in the periplasm. The enzyme catalyses L-cysteinyl-[SoxY protein] + thiosulfate + 2 Fe(III)-[cytochrome c] = S-sulfosulfanyl-L-cysteinyl-[SoxY protein] + 2 Fe(II)-[cytochrome c] + 2 H(+). It catalyses the reaction S-sulfanyl-L-cysteinyl-[SoxY protein] + thiosulfate + 2 Fe(III)-[cytochrome c] = S-(2-sulfodisulfanyl)-L-cysteinyl-[SoxY protein] + 2 Fe(II)-[cytochrome c] + 2 H(+). C-type monoheme cytochrome, which is part of the SoxAX cytochrome complex involved in sulfur oxidation. The SoxAX complex catalyzes the formation of a heterodisulfide bond between the conserved cysteine residue on a sulfur carrier SoxYZ complex subunit SoxY and thiosulfate or other inorganic sulfur substrates. This leads to the liberation of two electrons, which may be transferred from the SoxAX complex to another cytochrome c and which then may be used for reductive CO(2) fixation. The protein is L-cysteine S-thiosulfotransferase subunit SoxA of Chlorobaculum thiosulfatiphilum (Chlorobium limicola f.sp. thiosulfatophilum).